The following is a 2150-amino-acid chain: A disintegrin and metalloproteinase with thrombospondin motifs gon-1 (2150 aa).

The first 28 residues, 1 to 28 (MRSIGGSFHLLQPVVAALILLVVCLVYA), serve as a signal peptide directing secretion. The propeptide occupies 29-273 (LQSGSGTISE…VIERKARSRR (245 aa)). N-linked (GlcNAc...) asparagine glycosylation is found at Asn134, Asn213, Asn243, and Asn248. In terms of domain architecture, Peptidase M12B spans 280 to 493 (HYVEVLVVAD…GQTQCLFDQP (214 aa)). Disulfide bonds link Cys402-Cys488 and Cys440-Cys470. His424 contributes to the Zn(2+) binding site. Glu425 is an active-site residue. Zn(2+) is bound by residues His428 and His434. Residues 503–587 (FVRDEPGKKY…RLAPESLTKI (85 aa)) enclose the Disintegrin domain. Residues 588-643 (DGQWGDWRSWGECSRTCGGGVQKGLRDCDSPKPRNGGKYCVGQRERYRSCNTQECP) form the TSP type-1 1 domain. Cystine bridges form between Cys600-Cys637, Cys604-Cys642, and Cys615-Cys627. Asn842 is a glycosylation site (N-linked (GlcNAc...) asparagine). TSP type-1 domains follow at residues 943–1003 (CSTR…IDCS), 1004–1057 (GRKW…RECN), 1060–1115 (PCPR…HACT), 1116–1165 (WWQF…KPCH), 1168–1227 (SCPK…GTCP), 1228–1277 (FWRN…QTCH), 1280–1339 (PCTS…DTCD), 1352–1409 (PPIR…RDCS), 1410–1469 (YWKM…EPCP), 1474–1524 (HIGS…ELCP), and 1527–1585 (TNNS…PPCR). Residues Asn1139 and Asn1199 are each glycosylated (N-linked (GlcNAc...) asparagine). N-linked (GlcNAc...) asparagine glycans are attached at residues Asn1370 and Asn1432. N-linked (GlcNAc...) asparagine glycosylation is found at Asn1528, Asn1590, Asn1606, and Asn1654. The segment at 1590–1614 (NKTSSASMTSLSSSNSNTTSSASAS) is disordered. Positions 1592-1614 (TSSASMTSLSSSNSNTTSSASAS) are enriched in low complexity. 5 TSP type-1 domains span residues 1621–1675 (PVVS…VRCR), 1678–1736 (HCPR…VACP), 1737–1793 (AYRW…DTSN), 1794–1866 (CPYE…NPCD), and 1867–1924 (SEFK…RNCL). 6 disulfide bridges follow: Cys1679–Cys1718, Cys1690–Cys1694, Cys1690–Cys1730, Cys1694–Cys1735, Cys1705–Cys1718, and Cys1730–Cys1735. Asn1828 and Asn1855 each carry an N-linked (GlcNAc...) asparagine glycan. A GON domain is found at 1924–2123 (LPSTCQELKS…RYKGLIFEVN (200 aa)). N-linked (GlcNAc...) asparagine glycans are attached at residues Asn1942, Asn1960, and Asn1997.

The cofactor is Zn(2+). Expressed by the gonadal distal tip cells (DTCs). Expressed in muscles, including body wall, vulval and anal depressor muscles. Expressed in motor neurons and in ASI and ASJ neurons.

It localises to the secreted. The protein resides in the extracellular space. The protein localises to the extracellular matrix. It is found in the basement membrane. Its subcellular location is the endoplasmic reticulum. It localises to the golgi apparatus. In terms of biological role, secreted metalloprotease required for distal tip cell (DTC) migration along the body wall basement membranes, a key step that promotes gonad morphogenesis. Probably acts by remodeling the basement membrane during cell migration. Required to restrict presynaptic growth at the neuromuscular junctions (NMJ) in late larval stage and in adult motor neurons, probably by controlling collagen IV emb-9 degradation, a component of the synapse basement membrane. Also involved in the organization of adult muscle morphology. Has a protease-independent function in promoting the transport from the endoplasmic reticulum to the Golgi apparatus of a variety of secretory cargos. Required for the secretion of insulin-like peptide ins-7, daf-28 and ins-18 and TGF beta-like protein daf-7. In peripheral tissues, negatively regulates insulin-mediated daf-16 translocation and thereby negatively regulates lifespan and dauer formation. This chain is A disintegrin and metalloproteinase with thrombospondin motifs gon-1, found in Caenorhabditis elegans.